The following is a 117-amino-acid chain: Large ribosomal subunit protein bL20 (117 aa).

It belongs to the bacterial ribosomal protein bL20 family.

In terms of biological role, binds directly to 23S ribosomal RNA and is necessary for the in vitro assembly process of the 50S ribosomal subunit. It is not involved in the protein synthesizing functions of that subunit. This is Large ribosomal subunit protein bL20 from Aliivibrio fischeri (strain ATCC 700601 / ES114) (Vibrio fischeri).